The sequence spans 862 residues: Transcription factor E2F7 (862 aa).

2 DNA-binding regions span residues 140-209 (RKQK…CWHG) and 279-364 (RKDK…KWIG). Disordered regions lie at residues 561 to 592 (PGSD…DAPL), 617 to 643 (TPEQ…NVGE), and 788 to 862 (KADS…SAGN). Polar residues predominate over residues 564–574 (DSPTLEETTMS). Basic and acidic residues predominate over residues 575 to 590 (KQERPTKRQLNDKDDA). 2 stretches are compositionally biased toward polar residues: residues 633–643 (EPVTKHSNVGE) and 832–851 (DVSS…SSAQ).

It belongs to the E2F/DP family. As to quaternary structure, homodimer and heterodimer: mainly forms homodimers and, to a lesser extent, heterodimers with e2f8.

It is found in the nucleus. Its function is as follows. Atypical E2F transcription factor that participates in various processes such as angiogenesis and polyploidization of specialized cells. Mainly acts as a transcription repressor that binds DNA independently of DP proteins and specifically recognizes the E2 recognition site 5'-TTTC[CG]CGC-3'. Directly represses transcription of classical E2F transcription factors such as e2f1. Acts as a regulator of S-phase by recognizing and binding the E2-related site 5'-TTCCCGCC-3' and mediating repression of G1/S-regulated genes. Acts as a promoter of sprouting angiogenesis, possibly by acting as a transcription activator. In Xenopus tropicalis (Western clawed frog), this protein is Transcription factor E2F7 (e2f7).